A 1068-amino-acid chain; its full sequence is Phosphatidylinositol 4,5-bisphosphate 3-kinase catalytic subunit alpha isoform (1068 aa).

Positions 16–105 constitute a PI3K-ABD domain; sequence MPPRILVECL…QPFLKVIEPV (90 aa). The PI3K-RBD domain occupies 187–289; that stretch reads KGQIIVVIWV…GRMPNLMLMA (103 aa). The C2 PI3K-type domain maps to 330–487; that stretch reads INSALRIKIL…DWFSSVVKFP (158 aa). The PIK helical domain occupies 517 to 694; sequence LARDNELREN…GLLLESYCRA (178 aa). The PI3K/PI4K catalytic domain occupies 765–1051; the sequence is RLEECRIMSS…QMNDAHHGGW (287 aa). The tract at residues 771–777 is G-loop; sequence IMSSAKR. The tract at residues 912–920 is catalytic loop; sequence GIGDRHNSN. Residues 931–957 form an activation loop region; that stretch reads HIDFGHFLDHKKKKFGYKRERVPFVLT.

This sequence belongs to the PI3/PI4-kinase family. In terms of assembly, heterodimer of a catalytic subunit PIK3CA and a p85 regulatory subunit (PIK3R1, PIK3R2 or PIK3R3). Interacts with IRS1 in nuclear extracts. Interacts with RUFY3. Interacts with RASD2. Interacts with APPL1. Interacts with HRAS and KRAS. Interaction with HRAS/KRAS is required for PI3K pathway signaling and cell proliferation stimulated by EGF and FGF2. Interacts with FAM83B; activates the PI3K/AKT signaling cascade.

It carries out the reaction L-seryl-[protein] + ATP = O-phospho-L-seryl-[protein] + ADP + H(+). The enzyme catalyses a 1,2-diacyl-sn-glycero-3-phospho-(1D-myo-inositol) + ATP = a 1,2-diacyl-sn-glycero-3-phospho-(1D-myo-inositol-3-phosphate) + ADP + H(+). It catalyses the reaction a 1,2-diacyl-sn-glycero-3-phospho-(1D-myo-inositol-4,5-bisphosphate) + ATP = a 1,2-diacyl-sn-glycero-3-phospho-(1D-myo-inositol-3,4,5-trisphosphate) + ADP + H(+). The catalysed reaction is 1,2-dioctanoyl-sn-glycero-3-phospho-(1D-myo-inositol-4,5-bisphosphate) + ATP = 1,2-dioctanoyl-sn-glycero-3-phospho-(1D-myo-inositol-3,4,5-trisphosphate) + ADP + H(+). It carries out the reaction 1-octadecanoyl-2-(5Z,8Z,11Z,14Z)-eicosatetraenoyl-sn-glycero-3-phospho-1D-myo-inositol 4,5-bisphosphate + ATP = 1-octadecanoyl-2-(5Z,8Z,11Z,14Z-eicosatetraenoyl)-sn-glycero-3-phospho-(1D-myo-inositol 3,4,5-triphosphate) + ADP + H(+). The protein operates within phospholipid metabolism; phosphatidylinositol phosphate biosynthesis. Its function is as follows. Phosphoinositide-3-kinase (PI3K) phosphorylates phosphatidylinositol (PI) and its phosphorylated derivatives at position 3 of the inositol ring to produce 3-phosphoinositides. Uses ATP and PtdIns(4,5)P2 (phosphatidylinositol 4,5-bisphosphate) to generate phosphatidylinositol 3,4,5-trisphosphate (PIP3). PIP3 plays a key role by recruiting PH domain-containing proteins to the membrane, including AKT1 and PDPK1, activating signaling cascades involved in cell growth, survival, proliferation, motility and morphology. Participates in cellular signaling in response to various growth factors. Involved in the activation of AKT1 upon stimulation by receptor tyrosine kinases ligands such as EGF, insulin, IGF1, VEGFA and PDGF. Involved in signaling via insulin-receptor substrate (IRS) proteins. Essential in endothelial cell migration during vascular development through VEGFA signaling, possibly by regulating RhoA activity. Required for lymphatic vasculature development, possibly by binding to RAS and by activation by EGF and FGF2, but not by PDGF. Regulates invadopodia formation through the PDPK1-AKT1 pathway. Participates in cardiomyogenesis in embryonic stem cells through a AKT1 pathway. Participates in vasculogenesis in embryonic stem cells through PDK1 and protein kinase C pathway. In addition to its lipid kinase activity, it displays a serine-protein kinase activity that results in the autophosphorylation of the p85alpha regulatory subunit as well as phosphorylation of other proteins such as 4EBP1, H-Ras, the IL-3 beta c receptor and possibly others. Plays a role in the positive regulation of phagocytosis and pinocytosis. The protein is Phosphatidylinositol 4,5-bisphosphate 3-kinase catalytic subunit alpha isoform (PIK3CA) of Bos taurus (Bovine).